Reading from the N-terminus, the 605-residue chain is Elongation factor 4 (605 aa).

The tr-type G domain occupies 11–193; sequence KCIRNFSIIA…QIVTRISPPQ (183 aa). Residues 23-28 and 140-143 each bind GTP; these read DHGKST and NKVD.

This sequence belongs to the TRAFAC class translation factor GTPase superfamily. Classic translation factor GTPase family. LepA subfamily.

It is found in the cell membrane. The enzyme catalyses GTP + H2O = GDP + phosphate + H(+). Its function is as follows. Required for accurate and efficient protein synthesis under certain stress conditions. May act as a fidelity factor of the translation reaction, by catalyzing a one-codon backward translocation of tRNAs on improperly translocated ribosomes. Back-translocation proceeds from a post-translocation (POST) complex to a pre-translocation (PRE) complex, thus giving elongation factor G a second chance to translocate the tRNAs correctly. Binds to ribosomes in a GTP-dependent manner. The chain is Elongation factor 4 from Aster yellows witches'-broom phytoplasma (strain AYWB).